Consider the following 363-residue polypeptide: UDP-N-acetylglucosamine--N-acetylmuramyl-(pentapeptide) pyrophosphoryl-undecaprenol N-acetylglucosamine transferase (363 aa).

Residues 10–12 (TAG), asparagine 124, arginine 161, serine 195, and glutamine 291 each bind UDP-N-acetyl-alpha-D-glucosamine.

The protein belongs to the glycosyltransferase 28 family. MurG subfamily.

It localises to the cell membrane. The catalysed reaction is di-trans,octa-cis-undecaprenyl diphospho-N-acetyl-alpha-D-muramoyl-L-alanyl-D-glutamyl-meso-2,6-diaminopimeloyl-D-alanyl-D-alanine + UDP-N-acetyl-alpha-D-glucosamine = di-trans,octa-cis-undecaprenyl diphospho-[N-acetyl-alpha-D-glucosaminyl-(1-&gt;4)]-N-acetyl-alpha-D-muramoyl-L-alanyl-D-glutamyl-meso-2,6-diaminopimeloyl-D-alanyl-D-alanine + UDP + H(+). It participates in cell wall biogenesis; peptidoglycan biosynthesis. Cell wall formation. Catalyzes the transfer of a GlcNAc subunit on undecaprenyl-pyrophosphoryl-MurNAc-pentapeptide (lipid intermediate I) to form undecaprenyl-pyrophosphoryl-MurNAc-(pentapeptide)GlcNAc (lipid intermediate II). This Streptomyces avermitilis (strain ATCC 31267 / DSM 46492 / JCM 5070 / NBRC 14893 / NCIMB 12804 / NRRL 8165 / MA-4680) protein is UDP-N-acetylglucosamine--N-acetylmuramyl-(pentapeptide) pyrophosphoryl-undecaprenol N-acetylglucosamine transferase.